Here is a 332-residue protein sequence, read N- to C-terminus: Phosphate acyltransferase (332 aa).

The protein belongs to the PlsX family. As to quaternary structure, homodimer. Probably interacts with PlsY.

The protein resides in the cytoplasm. The catalysed reaction is a fatty acyl-[ACP] + phosphate = an acyl phosphate + holo-[ACP]. It functions in the pathway lipid metabolism; phospholipid metabolism. In terms of biological role, catalyzes the reversible formation of acyl-phosphate (acyl-PO(4)) from acyl-[acyl-carrier-protein] (acyl-ACP). This enzyme utilizes acyl-ACP as fatty acyl donor, but not acyl-CoA. The polypeptide is Phosphate acyltransferase (Sulfurimonas denitrificans (strain ATCC 33889 / DSM 1251) (Thiomicrospira denitrificans (strain ATCC 33889 / DSM 1251))).